The following is a 171-amino-acid chain: Peptide deformylase (171 aa).

The Fe cation site is built by Cys-91 and His-133. Glu-134 is a catalytic residue. His-137 provides a ligand contact to Fe cation.

Belongs to the polypeptide deformylase family. It depends on Fe(2+) as a cofactor.

It carries out the reaction N-terminal N-formyl-L-methionyl-[peptide] + H2O = N-terminal L-methionyl-[peptide] + formate. Its function is as follows. Removes the formyl group from the N-terminal Met of newly synthesized proteins. Requires at least a dipeptide for an efficient rate of reaction. N-terminal L-methionine is a prerequisite for activity but the enzyme has broad specificity at other positions. This chain is Peptide deformylase, found in Mannheimia succiniciproducens (strain KCTC 0769BP / MBEL55E).